Consider the following 202-residue polypeptide: Small ribosomal subunit protein uS5 (202 aa).

One can recognise an S5 DRBM domain in the interval 50–113; that stretch reads LKQELLNLNL…REAKLNITPV (64 aa).

Belongs to the universal ribosomal protein uS5 family. Part of the 30S ribosomal subunit. Contacts protein S4.

Functionally, with S4 and S12 plays an important role in translational accuracy. This chain is Small ribosomal subunit protein uS5, found in Pyrobaculum calidifontis (strain DSM 21063 / JCM 11548 / VA1).